Reading from the N-terminus, the 639-residue chain is CRKSLLQAVANLPYKGGNTLTGMALNFIRQQNFKTQAGMRPRARKIGVLITDGKSQDDVEAPSKKLKDEGVELFAIGIKNADEVELKMIATDPDDTHAYNVADFDSLSKIVDDLTINLCNSVKGPGDLEAPSNLVISERTHRSFRVSWTPPSDSVDRYKVEYYPVSGGKRQEFYVSRLETSTVLKDLKPETEYVVNVYSVVEDEYSEPLKGTEKTLPVPIVSLNIYDIGPTTMRVQWQPVGGATGYTVSYEPVKTTESTKPKEMRVGPTVNDVQLTDLLPSTEYEVTVQAVLHDLTSEPATAREMTLPLPRPQDVKLRDVTHSTMSVFWEPVLGKVRKYVVRYQTPEEDVKEVEVDRSRTSTSLKDLLSQTLYTVSVSAVYDEGESPPVTAQETTRPVPAPTNLRITEVTPESFRGTWDHGASDVSLYRITWAPFGSSDKMETILNGDENTLVFENLNPNTLYEVSVTAIYPDESESDDLTGSERTSPKSGPRNLQVYNATSNSLTVKWDPASGRVQKYRITYQPSRGEGNEQTTTIGGRQNSVVLQKLKPDTPYTITVSSLYPDGEGGRMTGRGKTKPLNTVRNLRVYDPSTSTLNVRWDHAEGNPRQYKLFYAPTAGGSEELVPIPGNTNYAILRNL.

One can recognise a VWFA domain in the interval 1–114 (CRKSLLQAVA…DSLSKIVDDL (114 aa)). 6 consecutive Fibronectin type-III domains span residues 130 to 219 (APSN…LPVP), 220 to 310 (IVSL…LPLP), 311 to 401 (RPQD…VPAP), 402 to 490 (TNLR…SPKS), 491 to 585 (GPRN…TVRN), and 586 to 639 (LRVY…LRNL). The tract at residues 473–496 (DESESDDLTGSERTSPKSGPRNLQ) is disordered.

The protein belongs to the fibril-associated collagens with interrupted helices (FACIT) family. As to quaternary structure, trimer of identical chains each containing 190 kDa of non-triple-helical sequences. Post-translationally, the triple-helical tail is stabilized by disulfide bonds at each end. In terms of processing, prolines at the third position of the tripeptide repeating unit (G-X-Y) are hydroxylated in some or all of the chains. O-glycosylated; glycosaminoglycan of chondroitin-sulfate type.

It is found in the secreted. The protein resides in the extracellular space. Its subcellular location is the extracellular matrix. Its function is as follows. Type XII collagen interacts with type I collagen-containing fibrils, the COL1 domain could be associated with the surface of the fibrils, and the COL2 and NC3 domains may be localized in the perifibrillar matrix. This chain is Collagen alpha-1(XII) chain (COL12A1), found in Oryctolagus cuniculus (Rabbit).